Here is a 375-residue protein sequence, read N- to C-terminus: Growth/differentiation factor 8 (375 aa).

The first 18 residues, 1–18 (MQRLQICVYIYLFVLIVA), serve as a signal peptide directing secretion. Positions 19–266 (GPVDLSENSE…VTDTPKRSRR (248 aa)) are excised as a propeptide. N-linked (GlcNAc...) asparagine glycosylation occurs at Asn-71. 3 disulfides stabilise this stretch: Cys-281–Cys-340, Cys-309–Cys-372, and Cys-313–Cys-374.

This sequence belongs to the TGF-beta family. In terms of assembly, homodimer; disulfide-linked. Interacts with WFIKKN2, leading to inhibit its activity. Interacts with FSTL3. Synthesized as large precursor molecule that undergoes proteolytic cleavage to generate an N-terminal propeptide and a disulfide linked C-terminal dimer, which is the biologically active molecule. The circulating form consists of a latent complex of the C-terminal dimer and other proteins, including its propeptide, which maintain the C-terminal dimer in a latent, inactive state. Ligand activation requires additional cleavage of the prodomain by a tolloid-like metalloproteinase.

It localises to the secreted. In terms of biological role, acts specifically as a negative regulator of skeletal muscle growth. This Vulpes vulpes (Red fox) protein is Growth/differentiation factor 8 (MSTN).